The sequence spans 404 residues: Zinc transporter 10 (404 aa).

Residues 1–22 (MESSSSSSYIPFIRQIAASVSA) form the signal peptide. Residues 23 to 49 (ASCDAVVGGGGDKDEECRDEAAALRLK) are Extracellular-facing. Residues 50-70 (MVAVAAILIAGAAGVAIPLVG) traverse the membrane as a helical segment. The Cytoplasmic portion of the chain corresponds to 71-86 (RRRRGGGGGGGGGASS). A helical transmembrane segment spans residues 87 to 107 (GGLFVLAKAFAAGVILATGFV). Topologically, residues 108–129 (HMLHDAEHALSNPCLPHSPWRR) are extracellular. A helical transmembrane segment spans residues 130–150 (FPFPGFVAMLAALATLVVDFV). Topologically, residues 151–248 (GTHFYERKHR…GHEEGPSARH (98 aa)) are cytoplasmic. The chain crosses the membrane as a helical span at residues 249–269 (VVVSQILELGIVSHSVIIGLS). Residues 270 to 280 (LGVSQSPCTIK) are Extracellular-facing. A helical membrane pass occupies residues 281 to 301 (PLVAALSFHQFFEGFALGGCI). Residues 302–311 (SEAQLKNFSA) lie on the Cytoplasmic side of the membrane. A helical membrane pass occupies residues 312–332 (FLMAFFFAITTPAGITVGAAV). The Extracellular segment spans residues 333-343 (ASFYNPNSPRA). Residues 344 to 364 (LVVEGILDSMSAGILIYMALV) traverse the membrane as a helical segment. Residues 365 to 383 (DLIAADFLSRKMSCNPRLQ) are Cytoplasmic-facing. Residues 384–404 (VGSYIALFLGAMAMAALALWA) traverse the membrane as a helical segment.

Belongs to the ZIP transporter (TC 2.A.5) family.

It localises to the cell membrane. Zinc transporter that may be involved in zinc uptake from the rhizosphere. The chain is Zinc transporter 10 (ZIP10) from Oryza sativa subsp. japonica (Rice).